Consider the following 455-residue polypeptide: ATP-dependent protease ATPase subunit HslU (455 aa).

ATP is bound by residues isoleucine 19, 61–66 (GVGKTE), aspartate 268, glutamate 333, and arginine 405.

Belongs to the ClpX chaperone family. HslU subfamily. As to quaternary structure, a double ring-shaped homohexamer of HslV is capped on each side by a ring-shaped HslU homohexamer. The assembly of the HslU/HslV complex is dependent on binding of ATP.

The protein localises to the cytoplasm. Its function is as follows. ATPase subunit of a proteasome-like degradation complex; this subunit has chaperone activity. The binding of ATP and its subsequent hydrolysis by HslU are essential for unfolding of protein substrates subsequently hydrolyzed by HslV. HslU recognizes the N-terminal part of its protein substrates and unfolds these before they are guided to HslV for hydrolysis. This chain is ATP-dependent protease ATPase subunit HslU, found in Francisella philomiragia subsp. philomiragia (strain ATCC 25017 / CCUG 19701 / FSC 153 / O#319-036).